Here is a 436-residue protein sequence, read N- to C-terminus: MFDSTLNPLWQRYILAVQEEVKPALGCTEPISLALAAAVAAAELEGPVERVEAWVSPNLMKNGLGVTVPGTGMVGLPIAAALGALGGNANAGLEVLKDATAQAIADAKALLAAGKVSVKIQEPCNEILFSRAKVWNGEKWACVTIVGGHTNIVHIETHDGVVFTQQACVAEGEQESPLSVLSRTTLAEILKFVNEVPFAAIRFILDSAKLNCALSQEGLSGKWGLHIGATLEKQCERGLLAKDLSSSIVIRTSAASDARMGGATLPAMSNSGSGNQGITATMPVVVVAEHFGADDERLARALMLSHLSAIYIHNQLPRLSALCAATTAAMGAAAGMAWLVDGRYETISMAISSMIGDVSGMICDGASNSCAMKVSTSASAAWKAVLMALDDTAVTGNEGIVAHDVEQSIANLCALASHSMQQTDRQIIEIMASKAR.

Belongs to the UPF0597 family.

Functionally, thought to be a D-serine dehydratase, however it does not complement a dsdA (D-serine dehydratase) mutant in strain CFT073, suggesting it may not have that function. This chain is UPF0597 protein YhaM, found in Escherichia coli O157:H7.